Reading from the N-terminus, the 1133-residue chain is Eukaryotic translation initiation factor 3 subunit A (1133 aa).

The 182-residue stretch at Ile317–Ser498 folds into the PCI domain. Coiled-coil stretches lie at residues Lys573–Arg700 and Glu784–Ser886. Residues Lys810–Gly893 show a composition bias toward basic and acidic residues. Residues Lys810–Arg1133 are disordered. A compositionally biased stretch (low complexity) spans Ala895 to Ala909. Basic and acidic residues-rich tracts occupy residues Gly920–Arg944, Val954–Trp1081, and Thr1097–Arg1117.

The protein belongs to the eIF-3 subunit A family. As to quaternary structure, component of the eukaryotic translation initiation factor 3 (eIF-3) complex.

The protein localises to the cytoplasm. In terms of biological role, RNA-binding component of the eukaryotic translation initiation factor 3 (eIF-3) complex, which is involved in protein synthesis of a specialized repertoire of mRNAs and, together with other initiation factors, stimulates binding of mRNA and methionyl-tRNAi to the 40S ribosome. The eIF-3 complex specifically targets and initiates translation of a subset of mRNAs involved in cell proliferation. The chain is Eukaryotic translation initiation factor 3 subunit A from Aedes aegypti (Yellowfever mosquito).